A 345-amino-acid chain; its full sequence is Histidinol-phosphate aminotransferase (345 aa).

Lys-206 carries the N6-(pyridoxal phosphate)lysine modification.

This sequence belongs to the class-II pyridoxal-phosphate-dependent aminotransferase family. Histidinol-phosphate aminotransferase subfamily. In terms of assembly, homodimer. It depends on pyridoxal 5'-phosphate as a cofactor.

It catalyses the reaction L-histidinol phosphate + 2-oxoglutarate = 3-(imidazol-4-yl)-2-oxopropyl phosphate + L-glutamate. Its pathway is amino-acid biosynthesis; L-histidine biosynthesis; L-histidine from 5-phospho-alpha-D-ribose 1-diphosphate: step 7/9. The polypeptide is Histidinol-phosphate aminotransferase (Bacteroides fragilis (strain ATCC 25285 / DSM 2151 / CCUG 4856 / JCM 11019 / LMG 10263 / NCTC 9343 / Onslow / VPI 2553 / EN-2)).